A 153-amino-acid polypeptide reads, in one-letter code: ORM1-like protein 2 (153 aa).

Residues 1–21 are Cytoplasmic-facing; sequence MNVGVAHSEVNPNTRVMNSRG. The next 2 helical transmembrane spans lie at 22 to 42 and 43 to 63; these read IWLA…SIPF and FSIP…TYVF. The Cytoplasmic portion of the chain corresponds to 64 to 105; the sequence is LHTVKGTPFETPDQGKARLLTHWEQMDYGLQFTSSRKFLSIS. The chain crosses the membrane as a helical span at residues 106–126; the sequence is PIVLYLLASFYTKYDAAHFLI. The Extracellular segment spans residues 127–153; it reads NTASLLSVLLPKLPQFHGVRVFGINKY.

Belongs to the ORM family. In terms of assembly, ceramide-sensitive subunit of the serine palmitoyltransferase (SPT) complex, which is also composed of SPTLC1, SPTLC2/3 and SPTSSA/B. As to expression, widely expressed. Expressed in adult and fetal heart, brain, lung, liver, skeletal muscle and kidney. Expressed in adult pancreas and placenta and in fetal spleen abd thymus.

It localises to the endoplasmic reticulum membrane. Functionally, plays an essential role in the homeostatic regulation of sphingolipid de novo biosynthesis by modulating the activity of the serine palmitoyltransferase (SPT) in response to ceramide levels. When complexed to SPT, the binding of ceramides to its N-terminus stabilizes a conformation that block SPT substrate entry, hence preventing SPT catalytic activity. Through this mechanism, maintains ceramide levels at sufficient concentrations for the production of complex sphingolipids, but which prevents the accumulation of ceramides to levels that trigger apoptosis. The polypeptide is ORM1-like protein 2 (ORMDL2) (Homo sapiens (Human)).